Reading from the N-terminus, the 687-residue chain is Hemin receptor (687 aa).

Residues 1–28 (MPRSTSDRFRWSPLSLAIACTLSLAVQA) form the signal peptide. A TonB box motif is present at residues 44–51 (DTMVVTAT). A TBDR plug domain is found at 56-167 (SSFEAPMMVT…LGGVISYETV (112 aa)). A TBDR beta-barrel domain is found at 178-687 (NSGYRVYSAA…NAKFFVSYQW (510 aa)). Positions 319 to 338 (ARPQGTPEEGRKQTTKGGKL) are disordered. Over residues 326-338 (EEGRKQTTKGGKL) the composition is skewed to basic and acidic residues. The short motif at 670–687 (QGVPQDGRNAKFFVSYQW) is the TonB C-terminal box element.

The protein belongs to the TonB-dependent receptor family.

It is found in the cell outer membrane. In terms of biological role, this protein is involved in the initial step of iron uptake by binding hemin, an iron chelatin siderophore that allows the bacteria to extract iron from the environment. In Yersinia enterocolitica, this protein is Hemin receptor (hemR).